The chain runs to 409 residues: Alpha-1-antitrypsin (409 aa).

Positions 1-15 are cleaved as a signal peptide; the sequence is LLLAGLCCLLPGSLA. Residues 18 to 39 are disordered; it reads PQGDAAQKTDTPPHDQNHPTLN. 4 N-linked (GlcNAc...) asparagine glycosylation sites follow: asparagine 61, asparagine 98, asparagine 136, and asparagine 262. Residues 364-383 form an RCL region; sequence GAMFLEAIPMSIPPEVKFNK. Serine 374 is subject to Phosphoserine.

It belongs to the serpin family. In terms of assembly, interacts with CELA2A. Interacts with ERGIC3 and LMAN1/ERGIC53. Interacts with PRSS1/Trypsin. As to expression, plasma.

The protein resides in the secreted. Functionally, inhibitor of serine proteases. Its primary target is elastase, but it also has a moderate affinity for plasmin and thrombin. Inhibits trypsin, chymotrypsin and plasminogen activator. This Papio anubis (Olive baboon) protein is Alpha-1-antitrypsin (SERPINA1).